Consider the following 627-residue polypeptide: 5-aminolevulinate synthase, non-specific, mitochondrial (627 aa).

The transit peptide at 1–58 (MDVIVRRCPFLARVPQAFFQQSKKSLAVYAQRCPFMMELASKPMAPSLARALCSSSSS) directs the protein to the mitochondrion. 3 residues coordinate substrate: Arg204, Ser321, and Lys340. Residues Ser373, His401, and Thr429 each coordinate pyridoxal 5'-phosphate. Residue Lys432 is part of the active site. Position 432 is an N6-(pyridoxal phosphate)lysine (Lys432). Positions 461 and 462 each coordinate pyridoxal 5'-phosphate. Thr549 contributes to the substrate binding site.

Belongs to the class-II pyridoxal-phosphate-dependent aminotransferase family. As to quaternary structure, homodimer. It depends on pyridoxal 5'-phosphate as a cofactor.

The protein localises to the mitochondrion inner membrane. The enzyme catalyses succinyl-CoA + glycine + H(+) = 5-aminolevulinate + CO2 + CoA. It functions in the pathway porphyrin-containing compound metabolism; protoporphyrin-IX biosynthesis; 5-aminolevulinate from glycine: step 1/1. Functionally, catalyzes the pyridoxal 5'-phosphate (PLP)-dependent condensation of succinyl-CoA and glycine to form aminolevulinic acid (ALA), with CoA and CO2 as by-products. The protein is 5-aminolevulinate synthase, non-specific, mitochondrial (alas1) of Opsanus tau (Oyster toadfish).